The sequence spans 225 residues: Cold-regulated 413 inner membrane protein 1, chloroplastic (225 aa).

The transit peptide at 1-76 (MASLCLSSSR…RKRGSSVVCY (76 aa)) directs the protein to the chloroplast. Residue Ala-77 is a topological domain, stromal. The chain crosses the membrane as a helical span at residues 78 to 98 (APISANSLQWISTISCLALML). Residues 99–102 (ARGT) lie on the Chloroplast intermembrane side of the membrane. Residues 103–123 (GIHKSVVVPLFALHAPSSIVA) form a helical membrane-spanning segment. Topologically, residues 124–128 (WIKGE) are stromal. The helical transmembrane segment at 129–149 (YGVWAAFLALIARLFFTFPGE) threads the bilayer. Residues 150–151 (LE) are Chloroplast intermembrane-facing. A helical transmembrane segment spans residues 152 to 172 (LPFIALLLVIVAPYQVMNIRG). Over 173 to 175 (KQE) the chain is Stromal. Residues 176 to 196 (GAIIAIAISGFLAFQHFSRAG) form a helical membrane-spanning segment. The Chloroplast intermembrane portion of the chain corresponds to 197–204 (SLEKAYEK). Residues 205 to 225 (GSVLATVAIIGVTVVSLLLLL) traverse the membrane as a helical segment.

Belongs to the Cold-regulated 413 protein family.

It localises to the plastid. Its subcellular location is the chloroplast inner membrane. The protein is Cold-regulated 413 inner membrane protein 1, chloroplastic (COR413IM1) of Arabidopsis thaliana (Mouse-ear cress).